Reading from the N-terminus, the 403-residue chain is MPFPTIPPIAGVEIATGRAGFYKHEREDLLLMRFAEGTSAAGVFTRHGVGSAPVDWCKRQLAATGGADVRALVVNAGCANSFTGKPGADAVRRVATAVGKRFDCRQRDVMMASTGVIGVILDDSKITARLPEVESRLKADAWAEAGRAIMTTDTFPKGAYATAVIDGHEVKIAGIAKGSGMIAPDMATMLAFVATDAAIAPAALQTLVSLYTRTTFNCVTVDGDRSTNDTLLLFATGQSGAPKIHRAGDKRLADFREKLEGVLLDLALQLVKDGEGATKFVKITVNGAESPASARKIARTIAESPLVKTAFAGEDANWGRIVMAVGRADEPVAREKISVKFGDLYAARDGLISAEYDEAKMSAYVKNQAFEVSVDVGVGRGSATVWTCDLTKQYVAINGDYRS.

Positions 151, 177, 188, 275, 398, and 403 each coordinate substrate. Threonine 188 acts as the Nucleophile in catalysis.

It belongs to the ArgJ family. In terms of assembly, heterotetramer of two alpha and two beta chains.

The protein localises to the cytoplasm. It catalyses the reaction N(2)-acetyl-L-ornithine + L-glutamate = N-acetyl-L-glutamate + L-ornithine. The catalysed reaction is L-glutamate + acetyl-CoA = N-acetyl-L-glutamate + CoA + H(+). It functions in the pathway amino-acid biosynthesis; L-arginine biosynthesis; L-ornithine and N-acetyl-L-glutamate from L-glutamate and N(2)-acetyl-L-ornithine (cyclic): step 1/1. The protein operates within amino-acid biosynthesis; L-arginine biosynthesis; N(2)-acetyl-L-ornithine from L-glutamate: step 1/4. Functionally, catalyzes two activities which are involved in the cyclic version of arginine biosynthesis: the synthesis of N-acetylglutamate from glutamate and acetyl-CoA as the acetyl donor, and of ornithine by transacetylation between N(2)-acetylornithine and glutamate. The protein is Arginine biosynthesis bifunctional protein ArgJ of Caulobacter vibrioides (strain ATCC 19089 / CIP 103742 / CB 15) (Caulobacter crescentus).